An 819-amino-acid chain; its full sequence is Probable beta-glucosidase G (819 aa).

The signal sequence occupies residues 1-20 (MTSASQILVWGLLAASGAQA). N-linked (GlcNAc...) asparagine glycans are attached at residues asparagine 41, asparagine 59, asparagine 107, asparagine 228, and asparagine 277. Residue aspartate 305 is part of the active site. N-linked (GlcNAc...) asparagine glycans are attached at residues asparagine 337, asparagine 344, asparagine 351, asparagine 403, asparagine 500, asparagine 509, asparagine 554, asparagine 567, asparagine 588, asparagine 627, asparagine 683, and asparagine 719.

The protein belongs to the glycosyl hydrolase 3 family.

The protein localises to the secreted. It carries out the reaction Hydrolysis of terminal, non-reducing beta-D-glucosyl residues with release of beta-D-glucose.. Its pathway is glycan metabolism; cellulose degradation. In terms of biological role, beta-glucosidases are one of a number of cellulolytic enzymes involved in the degradation of cellulosic biomass. Catalyzes the last step releasing glucose from the inhibitory cellobiose. This chain is Probable beta-glucosidase G (bglG), found in Emericella nidulans (strain FGSC A4 / ATCC 38163 / CBS 112.46 / NRRL 194 / M139) (Aspergillus nidulans).